Reading from the N-terminus, the 469-residue chain is Secreted triacylglycerol lipase LIP3 (469 aa).

The signal sequence occupies residues 1 to 21; the sequence is MVSLLWKFTLLCLFLLACTSA. Cys-121 and Cys-292 form a disulfide bridge. The active-site Nucleophile is the Ser-205. The N-linked (GlcNAc...) asparagine glycan is linked to Asn-238. Residues Asp-352 and His-386 contribute to the active site.

It belongs to the AB hydrolase superfamily. Lipase family. Class Lip subfamily.

The protein localises to the secreted. It carries out the reaction a triacylglycerol + H2O = a diacylglycerol + a fatty acid + H(+). It catalyses the reaction a monoacylglycerol + H2O = glycerol + a fatty acid + H(+). The catalysed reaction is a diacylglycerol + H2O = a monoacylglycerol + a fatty acid + H(+). Functionally, secreted lipase that hydrolyzes acylglycerol lipids such as triacylglycerols and consequently releases free fatty acid. Generates free oleic acid from the substrates mono- and diolein and hydrolyzes triolein in significant amounts. Due to an absence of fatty acid synthase genes in Malassezia species, secretory lipases are essential for the yeast to generate free fatty acids from degradation of sebum and assimilate them as lipid sources for growth. Plays an essential role at the pathogen-host interface during disease progression. Performs also the reverse reaction to build diacyl- and triacyl- glycerols from monoacylglycerols. This Malassezia restricta (strain ATCC 96810 / NBRC 103918 / CBS 7877) (Seborrheic dermatitis infection agent) protein is Secreted triacylglycerol lipase LIP3.